Reading from the N-terminus, the 415-residue chain is MADPFAPRTMKRRNVKGLALTPAAPKPPPTAENAPIHRDSDQHAQLEIGIEFNLDLRPEDLEVIKDLGSGNGGTVSKVRHIPTNTVMARKVIHVEAKREMRKRIVRELQIMHSCNSEYIVTFYGAFLNENNDVIMCMEYADVGSLDRVSRVFGPIRVDVLGKIAEATLGGLTYLYAKHHIMHRDIKPSNILVNSRGSIKLCDFGVSGELINSIADTFVGTSTYMAPERIQGEKYTVKSDVWSFGLSIMELAIGKFPFAASEQLSDAESAPAGILDLLQQIVHEPAPKLPKSDAFPQILEDMIQKCLYKNPDDRPTPEELFERDPFVQAAKRTPVDLREWAFGLMERDNRKSHLAPQLSPATADLLRSSDSPTATYHGDDRPLETPTSAYRVDPRRGPAEGSAGLADQVDRLYIRD.

The tract at residues 1 to 37 is disordered; sequence MADPFAPRTMKRRNVKGLALTPAAPKPPPTAENAPIH. Residues 61–326 form the Protein kinase domain; the sequence is LEVIKDLGSG…EELFERDPFV (266 aa). ATP contacts are provided by residues 67–75 and lysine 90; that span reads LGSGNGGTV. Residues 363–409 are disordered; it reads DLLRSSDSPTATYHGDDRPLETPTSAYRVDPRRGPAEGSAGLADQVD.

Belongs to the protein kinase superfamily. STE Ser/Thr protein kinase family. MAP kinase kinase subfamily. As to quaternary structure, homodimer. Interacts with the adapter protein MST50. Interacts with TRX2.

The enzyme catalyses L-seryl-[protein] + ATP = O-phospho-L-seryl-[protein] + ADP + H(+). It catalyses the reaction L-threonyl-[protein] + ATP = O-phospho-L-threonyl-[protein] + ADP + H(+). Its function is as follows. Mitogen-activated protein kinase kinase; part of the MST11-MST7-PMK1 MAP kinase (MAPK) cascade that is essential for appressorium formation, penetration and invasive growth. The MST11-MST7-PMK1 MAP kinase cascade transduces signals from the cell surface sensors MDB2 and SHO1 that recognize various surface signals such as surface hydrophobicity, cutin monomers, and rice leaf waxes. MST7 acts as the upstream MAPKK that directly phosphorylates MAP kinase PMK1. In Pyricularia oryzae (strain 70-15 / ATCC MYA-4617 / FGSC 8958) (Rice blast fungus), this protein is Mitogen-activated protein kinase kinae MST7.